The chain runs to 84 residues: Sec-independent protein translocase protein TatA (84 aa).

The chain crosses the membrane as a helical span at residues 1–21 (MGGISIWQLLIVAVIVVLLFG). Composition is skewed to basic and acidic residues over residues 42–55 (AMSDDDAKQDKTSQ) and 64–84 (IADKQGEAKKEDAKSQDKEQV). The tract at residues 42 to 84 (AMSDDDAKQDKTSQDADFTAKSIADKQGEAKKEDAKSQDKEQV) is disordered.

Belongs to the TatA/E family. The Tat system comprises two distinct complexes: a TatABC complex, containing multiple copies of TatA, TatB and TatC subunits, and a separate TatA complex, containing only TatA subunits. Substrates initially bind to the TatABC complex, which probably triggers association of the separate TatA complex to form the active translocon.

Its subcellular location is the cell inner membrane. Its function is as follows. Part of the twin-arginine translocation (Tat) system that transports large folded proteins containing a characteristic twin-arginine motif in their signal peptide across membranes. TatA could form the protein-conducting channel of the Tat system. The chain is Sec-independent protein translocase protein TatA from Salmonella typhi.